Consider the following 417-residue polypeptide: Serine hydroxymethyltransferase (417 aa).

(6S)-5,6,7,8-tetrahydrofolate-binding positions include Leu-121 and 125–127 (GHL). Lys-229 is subject to N6-(pyridoxal phosphate)lysine. Residue 355–357 (SPF) coordinates (6S)-5,6,7,8-tetrahydrofolate.

Belongs to the SHMT family. In terms of assembly, homodimer. Pyridoxal 5'-phosphate serves as cofactor.

It is found in the cytoplasm. It carries out the reaction (6R)-5,10-methylene-5,6,7,8-tetrahydrofolate + glycine + H2O = (6S)-5,6,7,8-tetrahydrofolate + L-serine. It functions in the pathway one-carbon metabolism; tetrahydrofolate interconversion. It participates in amino-acid biosynthesis; glycine biosynthesis; glycine from L-serine: step 1/1. In terms of biological role, catalyzes the reversible interconversion of serine and glycine with tetrahydrofolate (THF) serving as the one-carbon carrier. This reaction serves as the major source of one-carbon groups required for the biosynthesis of purines, thymidylate, methionine, and other important biomolecules. Also exhibits THF-independent aldolase activity toward beta-hydroxyamino acids, producing glycine and aldehydes, via a retro-aldol mechanism. This chain is Serine hydroxymethyltransferase, found in Xanthomonas euvesicatoria pv. vesicatoria (strain 85-10) (Xanthomonas campestris pv. vesicatoria).